The chain runs to 155 residues: Ribosomal RNA large subunit methyltransferase H (155 aa).

S-adenosyl-L-methionine is bound by residues leucine 72, glycine 103, and 122–127; that span reads LSPLTF.

This sequence belongs to the RNA methyltransferase RlmH family. As to quaternary structure, homodimer.

The protein resides in the cytoplasm. The enzyme catalyses pseudouridine(1915) in 23S rRNA + S-adenosyl-L-methionine = N(3)-methylpseudouridine(1915) in 23S rRNA + S-adenosyl-L-homocysteine + H(+). Specifically methylates the pseudouridine at position 1915 (m3Psi1915) in 23S rRNA. The sequence is that of Ribosomal RNA large subunit methyltransferase H from Alkalilimnicola ehrlichii (strain ATCC BAA-1101 / DSM 17681 / MLHE-1).